The sequence spans 509 residues: Maturase K (509 aa).

The protein belongs to the intron maturase 2 family. MatK subfamily.

It is found in the plastid. The protein resides in the chloroplast. Functionally, usually encoded in the trnK tRNA gene intron. Probably assists in splicing its own and other chloroplast group II introns. In Atropa belladonna (Belladonna), this protein is Maturase K.